We begin with the raw amino-acid sequence, 189 residues long: Thioredoxin-like protein CITRX, chloroplastic (189 aa).

Residues 1 to 36 constitute a chloroplast transit peptide; it reads MAMAAAASLLPACAAPTLPGRAFRPRRNSTPTASLS. Residues 72–189 form the Thioredoxin domain; the sequence is GSGKYIAPDY…MIRNIIDNEL (118 aa). Residues Cys-112 and Cys-115 each act as nucleophile in the active site. A disulfide bond links Cys-112 and Cys-115.

It belongs to the thioredoxin family. Plant CITRX-type subfamily.

The protein resides in the plastid. It localises to the chloroplast. Functionally, probable thiol-disulfide oxidoreductase that may play a role in proper chloroplast development. The chain is Thioredoxin-like protein CITRX, chloroplastic from Oryza sativa subsp. indica (Rice).